The following is a 482-amino-acid chain: tRNA sulfurtransferase (482 aa).

The 105-residue stretch at 61-165 (LAIRDALTRI…DDRLLLIKGR (105 aa)) folds into the THUMP domain. Residues 183 to 184 (LI), Lys265, Gly287, and Gln296 each bind ATP. A disulfide bridge links Cys344 with Cys456. A Rhodanese domain is found at 404-482 (FGPNDVILDI…GFENVKVYRP (79 aa)). Cys456 acts as the Cysteine persulfide intermediate in catalysis.

Belongs to the ThiI family.

It localises to the cytoplasm. It carries out the reaction [ThiI sulfur-carrier protein]-S-sulfanyl-L-cysteine + a uridine in tRNA + 2 reduced [2Fe-2S]-[ferredoxin] + ATP + H(+) = [ThiI sulfur-carrier protein]-L-cysteine + a 4-thiouridine in tRNA + 2 oxidized [2Fe-2S]-[ferredoxin] + AMP + diphosphate. The catalysed reaction is [ThiS sulfur-carrier protein]-C-terminal Gly-Gly-AMP + S-sulfanyl-L-cysteinyl-[cysteine desulfurase] + AH2 = [ThiS sulfur-carrier protein]-C-terminal-Gly-aminoethanethioate + L-cysteinyl-[cysteine desulfurase] + A + AMP + 2 H(+). Its pathway is cofactor biosynthesis; thiamine diphosphate biosynthesis. Its function is as follows. Catalyzes the ATP-dependent transfer of a sulfur to tRNA to produce 4-thiouridine in position 8 of tRNAs, which functions as a near-UV photosensor. Also catalyzes the transfer of sulfur to the sulfur carrier protein ThiS, forming ThiS-thiocarboxylate. This is a step in the synthesis of thiazole, in the thiamine biosynthesis pathway. The sulfur is donated as persulfide by IscS. In Salmonella enteritidis PT4 (strain P125109), this protein is tRNA sulfurtransferase.